Consider the following 115-residue polypeptide: MNLFVALFINASLSFILISVAFWLPQLNIYTEKASPYECGFDPLSSARLPFSMKFFLVAITFLLFDLEIALLLPLPWAIQITKLSAMMITSFILISILALGLIYEWMNKGLEWTE.

The next 3 helical transmembrane spans lie at Leu-3–Trp-23, Phe-55–Leu-75, and Leu-84–Tyr-104.

It belongs to the complex I subunit 3 family. In terms of assembly, core subunit of respiratory chain NADH dehydrogenase (Complex I) which is composed of 45 different subunits. Interacts with TMEM186. Interacts with TMEM242.

It localises to the mitochondrion inner membrane. The catalysed reaction is a ubiquinone + NADH + 5 H(+)(in) = a ubiquinol + NAD(+) + 4 H(+)(out). Functionally, core subunit of the mitochondrial membrane respiratory chain NADH dehydrogenase (Complex I) which catalyzes electron transfer from NADH through the respiratory chain, using ubiquinone as an electron acceptor. Essential for the catalytic activity of complex I. In Sigmodon hispidus (Hispid cotton rat), this protein is NADH-ubiquinone oxidoreductase chain 3.